The sequence spans 405 residues: Tryptophan synthase beta chain (405 aa).

Lys-95 is modified (N6-(pyridoxal phosphate)lysine).

It belongs to the TrpB family. Tetramer of two alpha and two beta chains. The cofactor is pyridoxal 5'-phosphate.

The catalysed reaction is (1S,2R)-1-C-(indol-3-yl)glycerol 3-phosphate + L-serine = D-glyceraldehyde 3-phosphate + L-tryptophan + H2O. It participates in amino-acid biosynthesis; L-tryptophan biosynthesis; L-tryptophan from chorismate: step 5/5. The beta subunit is responsible for the synthesis of L-tryptophan from indole and L-serine. This Pseudomonas putida (strain ATCC 47054 / DSM 6125 / CFBP 8728 / NCIMB 11950 / KT2440) protein is Tryptophan synthase beta chain.